A 312-amino-acid chain; its full sequence is Pantothenate kinase (312 aa).

97–104 (GSVAVGKS) is an ATP binding site.

This sequence belongs to the prokaryotic pantothenate kinase family.

The protein resides in the cytoplasm. The catalysed reaction is (R)-pantothenate + ATP = (R)-4'-phosphopantothenate + ADP + H(+). It participates in cofactor biosynthesis; coenzyme A biosynthesis; CoA from (R)-pantothenate: step 1/5. The chain is Pantothenate kinase from Mycobacterium sp. (strain JLS).